Here is a 162-residue protein sequence, read N- to C-terminus: Transcription elongation factor GreA (162 aa).

The stretch at 9–38 (QGYKALEEELARLKSERPEIIQAIKEAREE) forms a coiled coil.

It belongs to the GreA/GreB family.

Its function is as follows. Necessary for efficient RNA polymerase transcription elongation past template-encoded arresting sites. The arresting sites in DNA have the property of trapping a certain fraction of elongating RNA polymerases that pass through, resulting in locked ternary complexes. Cleavage of the nascent transcript by cleavage factors such as GreA or GreB allows the resumption of elongation from the new 3'terminus. GreA releases sequences of 2 to 3 nucleotides. The protein is Transcription elongation factor GreA of Desulfovibrio desulfuricans (strain ATCC 27774 / DSM 6949 / MB).